A 101-amino-acid polypeptide reads, in one-letter code: Movement protein (101 aa).

The chain crosses the membrane as a helical span at residues 30 to 50 (EVAILSFVALICIYLLYLWVL).

This sequence belongs to the mastrevirus movement protein family. As to quaternary structure, interacts with the capsid protein (CP). Part of a MP-CP-viral DNA complex.

The protein localises to the host membrane. Its function is as follows. Involved in the viral transport within, and between cells. This Maize streak virus genotype D (isolate Raw) (MSV) protein is Movement protein.